Here is a 211-residue protein sequence, read N- to C-terminus: DELTA-stichotoxin-Hmg2a (211 aa).

Positions 1–19 (MNRLIVLFLIVTMICATIA) are cleaved as a signal peptide. A propeptide spanning residues 20 to 34 (VPSREELEDQKEYKR) is cleaved from the precursor. Residues 37 to 46 (ALAGTIIEGA) form a plays an important role in the hemolytic activity region. Residues 45–64 (GASLGFQILDKVLGELGKVS) form an N-terminal region region. Phosphocholine-binding residues include Ser-88, Val-121, Ser-139, Pro-141, Tyr-167, Tyr-171, and Tyr-172. The interval 139–154 (SVPFDYNFYSNWWDVK) is trp-rich region, which is important for the binding to lipid membrane. The Cell attachment site, crucial for protein stability motif lies at 177-179 (RGD).

Belongs to the actinoporin family. Sea anemone subfamily. As to quaternary structure, octamer or nonamer in membranes. Monomer in the soluble state.

The protein resides in the secreted. The protein localises to the nematocyst. It localises to the target cell membrane. In terms of biological role, pore-forming protein that forms cations-selective hydrophilic pores of around 1 nm and causes cardiac stimulation and cytolysis. Pore formation is a multi-step process that involves specific recognition of membrane sphingomyelin (but neither cholesterol nor phosphatidylcholine) using aromatic rich region and adjacent phosphocholine (POC) binding site, firm binding to the membrane (mainly driven by hydrophobic interactions) accompanied by the transfer of the N-terminal region to the lipid-water interface and finally pore formation after oligomerization of monomers. This chain is DELTA-stichotoxin-Hmg2a, found in Heteractis magnifica (Magnificent sea anemone).